We begin with the raw amino-acid sequence, 382 residues long: Pyrimidine monooxygenase RutA (382 aa).

FMN is bound by residues 68–69 (IK), N134, E143, 159–160 (RY), and S209.

This sequence belongs to the NtaA/SnaA/DszA monooxygenase family. RutA subfamily.

It carries out the reaction uracil + FMNH2 + NADH + O2 = (Z)-3-ureidoacrylate + FMN + NAD(+) + H2O + H(+). The catalysed reaction is thymine + FMNH2 + NADH + O2 = (Z)-2-methylureidoacrylate + FMN + NAD(+) + H2O + H(+). Its function is as follows. Catalyzes the pyrimidine ring opening between N-3 and C-4 by an unusual flavin hydroperoxide-catalyzed mechanism, adding oxygen atoms in the process to yield ureidoacrylate peracid, that immediately reacts with FMN forming ureidoacrylate and FMN-N(5)-oxide. The FMN-N(5)-oxide reacts spontaneously with NADH to produce FMN. Requires the flavin reductase RutF to regenerate FMN in vivo. The sequence is that of Pyrimidine monooxygenase RutA from Escherichia coli (strain 55989 / EAEC).